Reading from the N-terminus, the 64-residue chain is Large ribosomal subunit protein uL30 (64 aa).

The protein belongs to the universal ribosomal protein uL30 family. As to quaternary structure, part of the 50S ribosomal subunit.

The polypeptide is Large ribosomal subunit protein uL30 (Rhodopseudomonas palustris (strain BisB18)).